The primary structure comprises 231 residues: Adenylate kinase (231 aa).

12–17 (GAGKGT) provides a ligand contact to ATP. The NMP stretch occupies residues 32 to 61 (STGDMLRAAVKAKTPLGLEVKKIMESGGLV). Residues T33, R38, 59–61 (GLV), 87–90 (GFPR), and Q94 each bind AMP. Positions 124-161 (GRLIHPASGRTYHRRYNPPKVADKDDVTGEPLIQRADD) are LID. ATP is bound by residues R125 and 134–135 (TY). 2 residues coordinate AMP: R158 and R169. G205 serves as a coordination point for ATP.

The protein belongs to the adenylate kinase family. As to quaternary structure, monomer.

It is found in the cytoplasm. The enzyme catalyses AMP + ATP = 2 ADP. The protein operates within purine metabolism; AMP biosynthesis via salvage pathway; AMP from ADP: step 1/1. In terms of biological role, catalyzes the reversible transfer of the terminal phosphate group between ATP and AMP. Plays an important role in cellular energy homeostasis and in adenine nucleotide metabolism. This chain is Adenylate kinase, found in Coxiella burnetii (strain CbuK_Q154) (Coxiella burnetii (strain Q154)).